Reading from the N-terminus, the 369-residue chain is Nudix hydrolase 8 (369 aa).

A Nudix hydrolase domain is found at 188-318; that stretch reads SHQVGVGGFV…GDKMFKRVIE (131 aa). A Nudix box motif is present at residues 225–246; sequence GFINESEEIFSGAVREVKEETG. Mg(2+)-binding residues include Glu240 and Glu244.

This sequence belongs to the Nudix hydrolase family. Requires Mg(2+) as cofactor. Mn(2+) is required as a cofactor. Expressed in roots, stems and, at lower level, leaves.

Functionally, probably mediates the hydrolysis of some nucleoside diphosphate derivatives. May be involved in plant immunity and act as a positive regulator of defense response through salicylic acid (SA) signaling. This chain is Nudix hydrolase 8 (NUDT8), found in Arabidopsis thaliana (Mouse-ear cress).